Here is a 125-residue protein sequence, read N- to C-terminus: Histone H2B (125 aa).

The disordered stretch occupies residues 1-32 (MAPKVRAAKKGEKRVGKAKSGTAETAKRRRGK). O-linked (GlcNAc) serine glycosylation is present at serine 112. Residue lysine 120 forms a Glycyl lysine isopeptide (Lys-Gly) (interchain with G-Cter in ubiquitin) linkage.

Belongs to the histone H2B family. In terms of assembly, the nucleosome is a histone octamer containing two molecules each of H2A, H2B, H3 and H4 assembled in one H3-H4 heterotetramer and two H2A-H2B heterodimers. The octamer wraps approximately 147 bp of DNA. In terms of processing, monoubiquitination of Lys-120 gives a specific tag for epigenetic transcriptional activation and is also prerequisite for histone H3 'Lys-4' and 'Lys-79' methylation. Post-translationally, glcNAcylation at Ser-112 promotes monoubiquitination of Lys-120. It fluctuates in response to extracellular glucose, and associates with transcribed genes.

The protein localises to the nucleus. The protein resides in the chromosome. Core component of nucleosome. Nucleosomes wrap and compact DNA into chromatin, limiting DNA accessibility to the cellular machineries which require DNA as a template. Histones thereby play a central role in transcription regulation, DNA repair, DNA replication and chromosomal stability. DNA accessibility is regulated via a complex set of post-translational modifications of histones, also called histone code, and nucleosome remodeling. The chain is Histone H2B from Acropora formosa (Staghorn coral).